Consider the following 226-residue polypeptide: UPF0758 protein SPs0978 (226 aa).

Residues 103–225 (SVLTSVQVAE…YYSFREKSTL (123 aa)) enclose the MPN domain. 3 residues coordinate Zn(2+): H174, H176, and D187. Positions 174–187 (HNHPSGNIEPSSND) match the JAMM motif motif.

It belongs to the UPF0758 family.

The sequence is that of UPF0758 protein SPs0978 from Streptococcus pyogenes serotype M3 (strain SSI-1).